The sequence spans 173 residues: Large ribosomal subunit protein bL9 (173 aa).

It belongs to the bacterial ribosomal protein bL9 family.

Functionally, binds to the 23S rRNA. In Rickettsia bellii (strain OSU 85-389), this protein is Large ribosomal subunit protein bL9.